A 492-amino-acid polypeptide reads, in one-letter code: GMP reductase (492 aa).

NADP(+) is bound by residues 30-31 (SR) and arginine 78. CBS domains follow at residues 99 to 162 (LIED…LVET) and 164 to 223 (MTPV…RNAT). Residues 260-262 (DIA) and 313-314 (VG) each bind NADP(+). K(+)-binding residues include glycine 314, glycine 316, and cysteine 319. The active-site Thioimidate intermediate is cysteine 319. The active-site Proton donor/acceptor is threonine 321. A K(+)-binding site is contributed by arginine 322. Residues 352–354 (DGG), 375–376 (GN), and 401–403 (GMA) each bind GMP. Residues methionine 402 and 454–457 (SGIS) contribute to the NADP(+) site. A Microbody targeting signal motif is present at residues 490–492 (SKL).

It belongs to the IMPDH/GMPR family. GuaC type 1 subfamily. As to quaternary structure, homotetramer.

Its subcellular location is the glycosome. The enzyme catalyses IMP + NH4(+) + NADP(+) = GMP + NADPH + 2 H(+). Activated by GTP and inhibited by XMP and the IMP analogs allopurinol nucleotide and thiopurinol nucleotide. Catalyzes the irreversible NADPH-dependent deamination of GMP to IMP. It functions in the conversion of nucleobase, nucleoside and nucleotide derivatives of G to A nucleotides, and in maintaining the intracellular balance of A and G nucleotides. The sequence is that of GMP reductase from Leishmania donovani.